Here is a 294-residue protein sequence, read N- to C-terminus: Elongation factor Ts (294 aa).

The involved in Mg(2+) ion dislocation from EF-Tu stretch occupies residues 80–83 (TDFV).

This sequence belongs to the EF-Ts family.

It localises to the cytoplasm. In terms of biological role, associates with the EF-Tu.GDP complex and induces the exchange of GDP to GTP. It remains bound to the aminoacyl-tRNA.EF-Tu.GTP complex up to the GTP hydrolysis stage on the ribosome. The sequence is that of Elongation factor Ts from Listeria innocua serovar 6a (strain ATCC BAA-680 / CLIP 11262).